Reading from the N-terminus, the 173-residue chain is Photosystem I assembly protein Ycf3 (173 aa).

3 TPR repeats span residues 35–68 (AFVY…EENP), 72–105 (SYIL…NPKM), and 120–153 (GEKA…APNN).

Belongs to the Ycf3 family.

The protein resides in the cellular thylakoid membrane. Essential for the assembly of the photosystem I (PSI) complex. May act as a chaperone-like factor to guide the assembly of the PSI subunits. This Synechocystis sp. (strain ATCC 27184 / PCC 6803 / Kazusa) protein is Photosystem I assembly protein Ycf3.